The chain runs to 327 residues: MATAVEYETLYTGQKIPLIGLGTWKSAPGQVKDAVKYALGVGYRHIDCAFVYGNETEVGEAIKESVGSDKGLSREEVFVTSKLWNNKHHPDDVECALRKTLQDLQLDYLDLYLMHWPYAFKRGDQIFPQNPDGSVQYDLTDYKDTWKAMEKLVKQGLTKAIGLSNFNKRQIDDIISIATVKPAVLQVECHPYLAQNELIAYCHAHGLVFTGYSPLGSPDRSWRKPEDPVLLEEPGIIAMAKKYGKSEAQILLRWQVQRKVVSIPKSVTPTRILQNFQVFDFSLSEEEMQLIGALNKNWRYIIPLITVNGKSVPRDAGHPLYPFNDPY.

NADP(+) is bound by residues 13–22 (GQKIPLIGLG), T23, W24, and D47. The Proton donor role is filled by Y52. Residues S164, N165, S213, L215, S217, K265, S266, V267, T268, R271, Q274, and N275 each coordinate NADP(+).

Belongs to the aldo/keto reductase family.

The protein localises to the cytoplasm. Its subcellular location is the cytosol. The protein resides in the apical cell membrane. It catalyses the reaction a primary alcohol + NADP(+) = an aldehyde + NADPH + H(+). The catalysed reaction is S-nitroso-CoA + NADPH + H(+) = sulfinamide-CoA + NADP(+). It carries out the reaction S-nitrosoglutathione + NADPH + H(+) = S-(hydroxysulfenamide)glutathione + NADP(+). In terms of biological role, catalyzes the NADPH-dependent reduction of a wide variety of carbonyl-containing compounds to their corresponding alcohols. Displays enzymatic activity towards endogenous metabolites such as aromatic and aliphatic aldehydes, ketones, monosaccharides and bile acids. Acts as an aldehyde-detoxification enzyme. Also acts as an inhibitor of protein S-nitrosylation by mediating degradation of S-nitroso-coenzyme A (S-nitroso-CoA), a cofactor required to S-nitrosylate proteins. Also acts as a S-nitroso-glutathione reductase by catalyzing the NADPH-dependent reduction of S-nitrosoglutathione. Displays no reductase activity towards retinoids. In Xenopus tropicalis (Western clawed frog), this protein is Aldo-keto reductase family 1 member A1 (akr1a1).